The sequence spans 210 residues: MSVSDLRQSYEKGVLVEEQAAASPFQQFARWFDEAVAARVPEPNAMTLATVNAEGQPSARIVLIKGYDDAGFVFFTNYESRKGLDLDANPRASLLFFWQPLERQVRIEGVIEKVSAAESDEYFHSRPLGSRLGAWASRQSQPITRDELEAREREFRDRYGEHPPRPPHWGGYRLKPNRFEFWQGRPSRLHDRLRYEPDGKQGWTIDRLSP.

Substrate-binding positions include 7–10 (RQSY) and lysine 65. FMN-binding positions include 60 to 65 (RIVLIK), 75 to 76 (FT), arginine 81, lysine 82, and glutamine 104. 3 residues coordinate substrate: tyrosine 122, arginine 126, and serine 130. Residues 139 to 140 (QS) and tryptophan 182 contribute to the FMN site. Residue 188–190 (RLH) participates in substrate binding. Arginine 192 lines the FMN pocket.

The protein belongs to the pyridoxamine 5'-phosphate oxidase family. In terms of assembly, homodimer. It depends on FMN as a cofactor.

The catalysed reaction is pyridoxamine 5'-phosphate + O2 + H2O = pyridoxal 5'-phosphate + H2O2 + NH4(+). The enzyme catalyses pyridoxine 5'-phosphate + O2 = pyridoxal 5'-phosphate + H2O2. It participates in cofactor metabolism; pyridoxal 5'-phosphate salvage; pyridoxal 5'-phosphate from pyridoxamine 5'-phosphate: step 1/1. Its pathway is cofactor metabolism; pyridoxal 5'-phosphate salvage; pyridoxal 5'-phosphate from pyridoxine 5'-phosphate: step 1/1. In terms of biological role, catalyzes the oxidation of either pyridoxine 5'-phosphate (PNP) or pyridoxamine 5'-phosphate (PMP) into pyridoxal 5'-phosphate (PLP). The polypeptide is Pyridoxine/pyridoxamine 5'-phosphate oxidase (Bordetella bronchiseptica (strain ATCC BAA-588 / NCTC 13252 / RB50) (Alcaligenes bronchisepticus)).